A 425-amino-acid polypeptide reads, in one-letter code: Serine--tRNA ligase (425 aa).

Position 228–230 (228–230) interacts with L-serine; sequence TAE. 259 to 261 is a binding site for ATP; sequence RSE. L-serine is bound at residue E282. 346–349 provides a ligand contact to ATP; sequence EIAS. An L-serine-binding site is contributed by S382.

The protein belongs to the class-II aminoacyl-tRNA synthetase family. Type-1 seryl-tRNA synthetase subfamily. As to quaternary structure, homodimer. The tRNA molecule binds across the dimer.

The protein localises to the cytoplasm. It carries out the reaction tRNA(Ser) + L-serine + ATP = L-seryl-tRNA(Ser) + AMP + diphosphate + H(+). The catalysed reaction is tRNA(Sec) + L-serine + ATP = L-seryl-tRNA(Sec) + AMP + diphosphate + H(+). The protein operates within aminoacyl-tRNA biosynthesis; selenocysteinyl-tRNA(Sec) biosynthesis; L-seryl-tRNA(Sec) from L-serine and tRNA(Sec): step 1/1. Its function is as follows. Catalyzes the attachment of serine to tRNA(Ser). Is also able to aminoacylate tRNA(Sec) with serine, to form the misacylated tRNA L-seryl-tRNA(Sec), which will be further converted into selenocysteinyl-tRNA(Sec). The sequence is that of Serine--tRNA ligase from Rickettsia peacockii (strain Rustic).